Consider the following 1588-residue polypeptide: MLPPKHLSATKPKKSWAPNLYELDSDLTKEPDVIIGEGPTDSEFFHQRFRNLIYVEFVGPRKTLIKLRNLCLDWLQPETHTKEEIIELLVLEQYLTIIPEKLKPWVRAKKPENCEKLVTLLENYKEMYQPEDDNNSDVTSDDDMTRNRRESSPPHSVHSFSGDRDWDRRGRSRDMEPRDRWSHTRNPRSRMPQRDLSLPVVAKTSFEMDRDDDRDSRAYESRSQDAESYQNVVDLAEDRKPHNTIQDNMENYRKLLSLGVQLAEDDGHSHMTQGHSSRSKRSAYPSTSRGLKTMPEAKKSTHRRGICEDESSHGVIMEKFIKDVSRSSKSGRARESSDRSQRFPRMSDDNWKDISLNKRESVIQQRVYEGNAFRGGFRFNSTLVSRKRVLERKRRYHFDTDGKGSIHDQKACPRKKPFECGSEMRKAMSMSSLSSLSSPSFTESQPIDFGAMPYVCDECGRSFSVISEFVEHQIMHTRENLYEYGESFIHSVAVSEVQKSQVGGKRFECKDCGETFNKSAALAEHRKIHARGYLVECKNQECEEAFMPSPTFSELQKIYGKDKFYECRVCKETFLHSSALIEHQKIHFGDDKDNEREHERERERGETFRPSPALNEFQKMYGKEKMYECKVCGETFLHSSSLKEHQKIHTRGNPFENKGKVCEETFIPGQSLKKRQKTYNKEKLYDFTDGRDAFMQSSELSEHQKIHSRKNLFEGRGYEKSVIHSGPFTESQKSHTITRPLESDEDEKAFTISSNPYENQKIPTKENVYEAKSYERSVIHSLASVEAQKSHSVAGPSKPKVMAESTIQSFDAINHQRVRAGGNTSEGREYSRSVIHSLVASKPPRSHNGNELVESNEKGESSIYISDLNDKRQKIPARENPCEGGSKNRNYEDSVIQSVSRAKPQKSVPGEGSGEFKKDGEFSVPSSNVREYQKARAKKKYIEHRSNETSVIHSLPFGEQTFRPRGMLYECQECGECFAHSSDLTEHQKIHDREKPSGSRNYEWSVIRSLAPTDPQTSYAQEQYAKEQAWNKCKEFRQFFATSEDLNTNQKIYDQEKSHGEESQGENTDGEETHSEETHGQETIEDPVIQGSDMEDPQKDDPDDKIYECEDCGLGFVDLTDLTDHQKVHSRKCLVDSREYTHSVIHTHSISEYQRDYTGEQLYECPKCGESFIHSSFLFEHQRIHEQDQLYSMKGCDDGFIALLPMKPRRNRAAERNPALAGSAIRCLLCGQGFIHSSALNEHMRLHREDDLLEQSQMAEEAIIPGLALTEFQRSQTEERLFECAVCGESFINPAELADHVTVHKNEPYVYGSSYTHTSFLTEPLKGAIPFYECKDCGKSFIHSTVLTKHKELHLEEEEEDEAAAAAAAAAQEVEANVHVPQVVLRIQGSNVEAAEPEVEAXEPEVEAAEPEVEAAEPNGEAEGPDGEAAEPIGEAGQPNGEAEQPNGDADEPDGAGIEDPEERAEEPEGKAEEPEGDADEPDGVGIEDPEEGEDQEIQVEEPYYDCHECTETFTSSTAFGEHLKTHASMIIFEPANAFGECSGYIERASTSTGGANQADEKYFKCDVCGQLFNDRLSLARHQNTHTG.

In terms of domain architecture, SCAN box spans 46–128 (HQRFRNLIYV…TLLENYKEMY (83 aa)). Disordered stretches follow at residues 128-230 (YQPE…ESYQ), 266-306 (DGHS…RRGI), and 319-349 (KFIKDVSRSSKSGRARESSDRSQRFPRMSDD). Acidic residues predominate over residues 129–142 (QPEDDNNSDVTSDD). Basic and acidic residues-rich tracts occupy residues 143-152 (DMTRNRRESS), 161-182 (SGDRDWDRRGRSRDMEPRDRWS), 206-225 (FEMDRDDDRDSRAYESRSQD), and 295-306 (PEAKKSTHRRGI). 3 C2H2-type zinc fingers span residues 454 to 476 (YVCDECGRSFSVISEFVEHQIMH), 507 to 529 (FECKDCGETFNKSAALAEHRKIH), and 565 to 587 (YECRVCKETFLHSSALIEHQKIH). Residues 588–607 (FGDDKDNEREHERERERGET) show a composition bias toward basic and acidic residues. The disordered stretch occupies residues 588–610 (FGDDKDNEREHERERERGETFRP). The segment at 627–649 (YECKVCGETFLHSSSLKEHQKIH) adopts a C2H2-type 4 zinc-finger fold. Positions 838 to 930 (LVASKPPRSH…EFSVPSSNVR (93 aa)) are disordered. The segment covering 868 to 881 (LNDKRQKIPARENP) has biased composition (basic and acidic residues). The segment at 969 to 991 (YECQECGECFAHSSDLTEHQKIH) adopts a C2H2-type 5 zinc-finger fold. Residues 1056 to 1104 (EKSHGEESQGENTDGEETHSEETHGQETIEDPVIQGSDMEDPQKDDPDD) form a disordered region. Over residues 1071–1082 (EETHSEETHGQE) the composition is skewed to basic and acidic residues. C2H2-type zinc fingers lie at residues 1107-1129 (YECEDCGLGFVDLTDLTDHQKVH), 1163-1185 (YECPKCGESFIHSSFLFEHQRIH), 1225-1247 (IRCLLCGQGFIHSSALNEHMRLH), 1282-1304 (FECAVCGESFINPAELADHVTVH), and 1332-1354 (YECKDCGKSFIHSTVLTKHKELH). Residues 1393-1495 (EAAEPEVEAX…GIEDPEEGED (103 aa)) form a disordered region. Acidic residues predominate over residues 1395-1415 (AEPEVEAXEPEVEAAEPEVEA). 7 consecutive repeat copies span residues 1397–1403 (PEVEAXE), 1404–1410 (PEVEAAE), 1411–1417 (PEVEAAE), 1418–1422 (PNGEA), 1425–1429 (PDGEA), 1432–1436 (PIGEA), and 1439–1443 (PNGEA). The tract at residues 1397 to 1417 (PEVEAXEPEVEAAEPEVEAAE) is 3 X 7 AA repeat of P-E-V-E-A-A-E. A 4 X 5 AA repeat of P-X-G-E-A region spans residues 1418–1443 (PNGEAEGPDGEAAEPIGEAGQPNGEA). Composition is skewed to acidic residues over residues 1449–1466 (DADEPDGAGIEDPEERAE) and 1475–1495 (PEGDADEPDGVGIEDPEEGED). 2 consecutive C2H2-type zinc fingers follow at residues 1505-1527 (YDCHECTETFTSSTAFGEHLKTH) and 1564-1586 (FKCDVCGQLFNDRLSLARHQNTH).

The protein belongs to the krueppel C2H2-type zinc-finger protein family. In terms of assembly, homodimer. Interacts with SIAH1A and SIAH2. Interacts with TRAF2.

Its subcellular location is the nucleus. It localises to the cytoplasm. In terms of biological role, induces apoptosis in cooperation with SIAH1A. Acts as a mediator between p53/TP53 and BAX in a neuronal death pathway that is activated by DNA damage. Acts synergistically with TRAF2 and inhibits TNF induced apoptosis through activation of NF-kappa-B. In Pan paniscus (Pygmy chimpanzee), this protein is Paternally-expressed gene 3 protein (PEG3).